The following is a 129-amino-acid chain: Small ribosomal subunit protein uS11 (129 aa).

This sequence belongs to the universal ribosomal protein uS11 family. In terms of assembly, part of the 30S ribosomal subunit. Interacts with proteins S7 and S18. Binds to IF-3.

Functionally, located on the platform of the 30S subunit, it bridges several disparate RNA helices of the 16S rRNA. Forms part of the Shine-Dalgarno cleft in the 70S ribosome. This is Small ribosomal subunit protein uS11 from Aeromonas hydrophila subsp. hydrophila (strain ATCC 7966 / DSM 30187 / BCRC 13018 / CCUG 14551 / JCM 1027 / KCTC 2358 / NCIMB 9240 / NCTC 8049).